Here is a 289-residue protein sequence, read N- to C-terminus: 4-diphosphocytidyl-2-C-methyl-D-erythritol kinase (289 aa).

K11 is a catalytic residue. Residue 93–103 (PLAAGLAGGSA) participates in ATP binding. The active site involves D135.

This sequence belongs to the GHMP kinase family. IspE subfamily.

It catalyses the reaction 4-CDP-2-C-methyl-D-erythritol + ATP = 4-CDP-2-C-methyl-D-erythritol 2-phosphate + ADP + H(+). Its pathway is isoprenoid biosynthesis; isopentenyl diphosphate biosynthesis via DXP pathway; isopentenyl diphosphate from 1-deoxy-D-xylulose 5-phosphate: step 3/6. Functionally, catalyzes the phosphorylation of the position 2 hydroxy group of 4-diphosphocytidyl-2C-methyl-D-erythritol. The polypeptide is 4-diphosphocytidyl-2-C-methyl-D-erythritol kinase (Thermoanaerobacter pseudethanolicus (strain ATCC 33223 / 39E) (Clostridium thermohydrosulfuricum)).